The chain runs to 185 residues: Keratin-associated protein 4-8 (185 aa).

25 repeat units span residues 14–18 (GCGQD), 19–23 (LCQET), 24–28 (CCCPS), 39–43 (CYRPS), 44–48 (YSVSC), 49–53 (CCRPQ), 54–58 (CCQSV), 59–63 (CCQPT), 64–68 (CCRPS), 69–73 (CCVSS), 74–78 (CCKPQ), 79–83 (CCQSV), 84–88 (CCQPT), 89–93 (CCHPS), 94–98 (CCISS), 99–103 (CCRPS), 104–108 (CCVSS), 109–113 (CCKPQ), 114–118 (CCQSV), 119–123 (CCQPN), 124–128 (CCRPS), 134–138 (CCRPS), 139–143 (CCESS), 144–148 (CCRPC), and 149–164 (CCLR…HTTC). Residues 14–164 (GCGQDLCQET…CGRVSCHTTC (151 aa)) are 25 X 5 AA repeats of C-C-[IKRQVHEC]-[SPRT]-[STCVQPR].

The protein belongs to the KRTAP type 4 family. Interacts with hair keratins. In terms of tissue distribution, expressed in the hair follicles.

Its function is as follows. In the hair cortex, hair keratin intermediate filaments are embedded in an interfilamentous matrix, consisting of hair keratin-associated proteins (KRTAP), which are essential for the formation of a rigid and resistant hair shaft through their extensive disulfide bond cross-linking with abundant cysteine residues of hair keratins. The matrix proteins include the high-sulfur and high-glycine-tyrosine keratins. In Homo sapiens (Human), this protein is Keratin-associated protein 4-8 (KRTAP4-8).